A 231-amino-acid polypeptide reads, in one-letter code: Small ribosomal subunit protein uS3 (231 aa).

Positions 39–107 (IRKFIKEKLF…QVSVNIVEIK (69 aa)) constitute a KH type-2 domain.

The protein belongs to the universal ribosomal protein uS3 family. Part of the 30S ribosomal subunit. Forms a tight complex with proteins S10 and S14.

Binds the lower part of the 30S subunit head. Binds mRNA in the 70S ribosome, positioning it for translation. This chain is Small ribosomal subunit protein uS3, found in Pelotomaculum thermopropionicum (strain DSM 13744 / JCM 10971 / SI).